The sequence spans 872 residues: Alanine--tRNA ligase (872 aa).

Positions 567, 571, 669, and 673 each coordinate Zn(2+).

It belongs to the class-II aminoacyl-tRNA synthetase family. It depends on Zn(2+) as a cofactor.

The protein localises to the cytoplasm. The enzyme catalyses tRNA(Ala) + L-alanine + ATP = L-alanyl-tRNA(Ala) + AMP + diphosphate. Catalyzes the attachment of alanine to tRNA(Ala) in a two-step reaction: alanine is first activated by ATP to form Ala-AMP and then transferred to the acceptor end of tRNA(Ala). Also edits incorrectly charged Ser-tRNA(Ala) and Gly-tRNA(Ala) via its editing domain. The sequence is that of Alanine--tRNA ligase from Streptococcus pyogenes serotype M3 (strain ATCC BAA-595 / MGAS315).